The primary structure comprises 637 residues: MSQQETHGFQTEVKQLLHLMIHSLYSNKEIFLRELVSNAADAADKLRYLALTNDALYEGDGELRVRISADKEKGTVTIEDNGVGMTRDGVIEHLGTIAKSGTAEFFKNLSGEASKDSQLIGQFGVGFYSAFIVAKKVTVRTRAAGHKANEAVLWESEGEGSFTVDTITKASRGTEITLHLRDEEKEFADEWRLRSIITKYSDHISVPVEMWQEGTPERDGPDGEKIPATEGYWKVMNKATALWMRNKSEISDEEYQEFYKHISHDYTDALLWSHNRVEGKQEYTNLLYIPSKAPWDLWNRDRKHGLKLFVQRVFIMDDAEQFMPSYLRFVQGLIDSNDLPLNVSREILQDNHITKAMRTGITKRVLGMLEKLAKDDAEKYQQFWAEFGQVLKEGPAEDFANRERIAGLLRFASTHTGSAAPTVSLDDYLSRMKEGQNKIYYIVADSHEAAANSPHLELLRKKGIEVLLMSERIDEWLINHLTEYKEKQLHSVTRGELELGELEDAAEKEAQEKLAEESAPLVERIKAALGASVADVKVTSRLTDTPACVVTGEGEMSSQMIKLMQAAGQPVPEVKPTFEINPAHPLVSRLNDLQDEAAFADWSNLLLQQAQLSEKGSLADPSAFIKLMNQMLLANLK.

The tract at residues 1–345 (MSQQETHGFQ…SNDLPLNVSR (345 aa)) is a; substrate-binding. A b region spans residues 346–562 (EILQDNHITK…EGEMSSQMIK (217 aa)). The segment at 563–637 (LMQAAGQPVP…MNQMLLANLK (75 aa)) is c.

Belongs to the heat shock protein 90 family. Homodimer.

The protein resides in the cytoplasm. Its function is as follows. Molecular chaperone. Has ATPase activity. This is Chaperone protein HtpG from Shewanella sp. (strain MR-7).